We begin with the raw amino-acid sequence, 193 residues long: Peptidyl-tRNA hydrolase (193 aa).

Tyrosine 15 serves as a coordination point for tRNA. The Proton acceptor role is filled by histidine 20. The tRNA site is built by phenylalanine 65, asparagine 67, and asparagine 113.

This sequence belongs to the PTH family. As to quaternary structure, monomer.

Its subcellular location is the cytoplasm. It carries out the reaction an N-acyl-L-alpha-aminoacyl-tRNA + H2O = an N-acyl-L-amino acid + a tRNA + H(+). Hydrolyzes ribosome-free peptidyl-tRNAs (with 1 or more amino acids incorporated), which drop off the ribosome during protein synthesis, or as a result of ribosome stalling. Functionally, catalyzes the release of premature peptidyl moieties from peptidyl-tRNA molecules trapped in stalled 50S ribosomal subunits, and thus maintains levels of free tRNAs and 50S ribosomes. The chain is Peptidyl-tRNA hydrolase from Ehrlichia canis (strain Jake).